Reading from the N-terminus, the 503-residue chain is 4-trimethylaminobutyraldehyde dehydrogenase (503 aa).

Residues Lys-189 and 241-245 (GSVPT) contribute to the NAD(+) site. Glu-263 (proton acceptor) is an active-site residue. Cys-297 serves as the catalytic Nucleophile. Glu-400 contributes to the NAD(+) binding site.

The protein belongs to the aldehyde dehydrogenase family. As to quaternary structure, homotetramer.

It is found in the cytoplasm. The protein resides in the cytosol. The catalysed reaction is 4-(trimethylamino)butanal + NAD(+) + H2O = 4-(trimethylamino)butanoate + NADH + 2 H(+). It catalyses the reaction an aldehyde + NAD(+) + H2O = a carboxylate + NADH + 2 H(+). Its pathway is amine and polyamine biosynthesis; carnitine biosynthesis. Functionally, converts gamma-trimethylaminobutyraldehyde into gamma-butyrobetaine with high efficiency (in vitro). Can catalyze the irreversible oxidation of a broad range of aldehydes to the corresponding acids in an NAD-dependent reaction, but with low efficiency. The chain is 4-trimethylaminobutyraldehyde dehydrogenase (aldh9A1) from Gadus morhua subsp. callarias (Baltic cod).